The primary structure comprises 223 residues: Protein Wnt-1 (223 aa).

3 disulfides stabilise this stretch: Cys7-Cys24, Cys72-Cys86, and Cys74-Cys81. Ser78 carries O-palmitoleoyl serine; by PORCN lipidation. The tract at residues 110–135 is disordered; sequence VTMRNDGSPSDRETESSFVPYNPSHK. A compositionally biased stretch (polar residues) spans 125 to 135; the sequence is SSFVPYNPSHK. 6 cysteine pairs are disulfide-bonded: Cys152-Cys183, Cys168-Cys178, Cys182-Cys222, Cys198-Cys213, Cys200-Cys210, and Cys205-Cys206. N-linked (GlcNAc...) asparagine glycosylation occurs at Asn169.

It belongs to the Wnt family. Post-translationally, palmitoleoylation is required for efficient binding to frizzled receptors. Palmitoleoylation is necessary for proper trafficking to cell surface. Depalmitoleoylated by NOTUM, leading to inhibit Wnt signaling pathway.

It is found in the secreted. The protein localises to the extracellular space. Its subcellular location is the extracellular matrix. Its function is as follows. Ligand for members of the frizzled family of seven transmembrane receptors. Probable developmental protein. This is Protein Wnt-1 (WNT-1) from Strongylocentrotus purpuratus (Purple sea urchin).